The chain runs to 185 residues: Elongation factor P (185 aa).

It belongs to the elongation factor P family.

Its subcellular location is the cytoplasm. It participates in protein biosynthesis; polypeptide chain elongation. Its function is as follows. Involved in peptide bond synthesis. Stimulates efficient translation and peptide-bond synthesis on native or reconstituted 70S ribosomes in vitro. Probably functions indirectly by altering the affinity of the ribosome for aminoacyl-tRNA, thus increasing their reactivity as acceptors for peptidyl transferase. The chain is Elongation factor P from Desulfovibrio desulfuricans (strain ATCC 27774 / DSM 6949 / MB).